Reading from the N-terminus, the 474-residue chain is MKNFMCDDFLLNNETARQLYHEHAADMPIYDYHCHLNPREIAENRRFDNLGQIWLEGDHYKWRAMRCAGIDESLITGKQTRDYEKYQAWAETVPLTLGNPLYHWTHLELRRPFGISGILFGPQTADEIWHQCNEKLAAPAFSARGIMQQMNVRMVGTTDDPVDSLQYHRQIATDESFDIEVLPSWRPDRVFKIELAGFIDYIKQLEAVADVSIVAFADVLNALERRLEHFAAHGCRAADHGIENLRYAPIPDETVLNGILQKRLAGGILSELEIAQYTTAILVWLGRQYAARGWVMQMHIGAIRNNNSRMFRLLGADSGFDSIGDNNIAWPLSRLLDSMDVTDELPKTILYCLNPRDNEVIATMASNFQGGGIAGKVQFGSGWWFNDQKDGMLRQLEQLSQLGLLSQFVGMLTDSRSFLSYTRHEYFRRILCNVLGQWAEKGEIPNHKAMLGQIVEDICFNNARRYFALPGENL.

It belongs to the metallo-dependent hydrolases superfamily. Uronate isomerase family.

It carries out the reaction D-glucuronate = D-fructuronate. It catalyses the reaction aldehydo-D-galacturonate = keto-D-tagaturonate. It participates in carbohydrate metabolism; pentose and glucuronate interconversion. This Photorhabdus laumondii subsp. laumondii (strain DSM 15139 / CIP 105565 / TT01) (Photorhabdus luminescens subsp. laumondii) protein is Uronate isomerase.